We begin with the raw amino-acid sequence, 510 residues long: Rab proteins geranylgeranyltransferase component A 1 (510 aa).

The protein belongs to the Rab GDI family. In terms of assembly, may interact with rab-5, rab-7 and rab-11. Does not interact with rab-3, rab-27 and rab-10. In terms of tissue distribution, expressed in several neurons including head neurons, motor neurons located in the ventral nerve cord, HSN and CAN neurons, and tail neurons, and in muscles such as body-wall, pharyngeal, intestinal and anal sphincter. Also expressed in seam cells, the hypodermis and the intestine.

It is found in the cytoplasm. Functionally, substrate-binding subunit of the Rab geranylgeranyltransferase (GGTase) complex. Binds unprenylated Rab proteins and presents the substrate peptide to the catalytic component B and remains bound to it after the geranylgeranyl transfer reaction. The component A is thought to be regenerated by transferring its prenylated Rab back to the donor membrane. Plays a role in neurotransmitter release from presynaptic terminals at neuromuscular junctions. Positively regulates the function of rab-27 in synaptic transmission most likely through mediating rab-27 prenylation. The polypeptide is Rab proteins geranylgeranyltransferase component A 1 (Caenorhabditis elegans).